Reading from the N-terminus, the 449-residue chain is Chromosomal replication initiator protein DnaA (449 aa).

A domain I, interacts with DnaA modulators region spans residues 1 to 72 (MPNLEELWAY…VEGVYEFAQL (72 aa)). The interval 72-109 (LEVDPVIMTKDELQPAPATDQRPAVEEDDQNLTFKAKT) is domain II. Residues 110–326 (HLNPKYTFDH…GALVRVQAFS (217 aa)) form a domain III, AAA+ region region. Positions 154, 156, 157, and 158 each coordinate ATP. The tract at residues 327 to 449 (TMKNEDITTS…ELRNILKNRG (123 aa)) is domain IV, binds dsDNA.

The protein belongs to the DnaA family. As to quaternary structure, oligomerizes as a right-handed, spiral filament on DNA at oriC.

Its subcellular location is the cytoplasm. Its function is as follows. Plays an essential role in the initiation and regulation of chromosomal replication. ATP-DnaA binds to the origin of replication (oriC) to initiate formation of the DNA replication initiation complex once per cell cycle. Binds the DnaA box (a 9 base pair repeat at the origin) and separates the double-stranded (ds)DNA. Forms a right-handed helical filament on oriC DNA; dsDNA binds to the exterior of the filament while single-stranded (ss)DNA is stabiized in the filament's interior. The ATP-DnaA-oriC complex binds and stabilizes one strand of the AT-rich DNA unwinding element (DUE), permitting loading of DNA polymerase. After initiation quickly degrades to an ADP-DnaA complex that is not apt for DNA replication. Binds acidic phospholipids. This chain is Chromosomal replication initiator protein DnaA, found in Lacticaseibacillus paracasei (strain ATCC 334 / BCRC 17002 / CCUG 31169 / CIP 107868 / KCTC 3260 / NRRL B-441) (Lactobacillus paracasei).